Reading from the N-terminus, the 913-residue chain is DNA mismatch repair protein MutS (913 aa).

Residue 720 to 727 coordinates ATP; that stretch reads GPNASGKS.

Belongs to the DNA mismatch repair MutS family.

In terms of biological role, this protein is involved in the repair of mismatches in DNA. It is possible that it carries out the mismatch recognition step. This protein has a weak ATPase activity. The polypeptide is DNA mismatch repair protein MutS (Prochlorococcus marinus (strain AS9601)).